The following is a 428-amino-acid chain: 4-hydroxy-3-methylbut-2-en-1-yl diphosphate synthase (flavodoxin) (428 aa).

Positions 315, 318, 361, and 368 each coordinate [4Fe-4S] cluster.

This sequence belongs to the IspG family. [4Fe-4S] cluster is required as a cofactor.

The catalysed reaction is (2E)-4-hydroxy-3-methylbut-2-enyl diphosphate + oxidized [flavodoxin] + H2O + 2 H(+) = 2-C-methyl-D-erythritol 2,4-cyclic diphosphate + reduced [flavodoxin]. It functions in the pathway isoprenoid biosynthesis; isopentenyl diphosphate biosynthesis via DXP pathway; isopentenyl diphosphate from 1-deoxy-D-xylulose 5-phosphate: step 5/6. In terms of biological role, converts 2C-methyl-D-erythritol 2,4-cyclodiphosphate (ME-2,4cPP) into 1-hydroxy-2-methyl-2-(E)-butenyl 4-diphosphate. The protein is 4-hydroxy-3-methylbut-2-en-1-yl diphosphate synthase (flavodoxin) of Ralstonia pickettii (strain 12J).